A 1238-amino-acid chain; its full sequence is Cullin-associated NEDD8-dissociated protein 1 (1238 aa).

HEAT repeat units lie at residues 41 to 78 (TYEN…RVKD), 126 to 167 (LVIK…KYGS), 171 to 208 (GDLE…PSPD), 210 to 247 (LFNS…SSGY), and 251 to 292 (KYLP…KCQK). A disordered region spans residues 315-354 (YSDDGEGEEDGDEEEEEMETSGDNDEEQEEEEEEEDLSDD). HEAT repeat units lie at residues 382–419 (ELYQ…QLNK), 432–469 (QQVP…IIPG), 603–641 (EIQS…SSIN), 646–683 (SILP…VCPN), 688–725 (SLLT…NYSE), 853–890 (HENE…CSLQ), 933–966 (PFLQ…KLSM), 967–1004 (IEPN…ENKE), and 1008–1045 (QYLA…NKPN).

Belongs to the CAND family.

It is found in the nucleus. Functionally, key assembly factor of SCF (SKP1-CUL1-F-box protein) E3 ubiquitin ligase complexes that promotes the exchange of the substrate-recognition F-box subunit in SCF complexes, thereby playing a key role in the cellular repertoire of SCF complexes. Acts as a F-box protein exchange factor. The protein is Cullin-associated NEDD8-dissociated protein 1 (cand1) of Dictyostelium discoideum (Social amoeba).